Reading from the N-terminus, the 545-residue chain is E3 ubiquitin-protein ligase ipaH9.8 (545 aa).

Residues 1–242 (MLPINNNFSL…YHGPRIYFSM (242 aa)) are interaction with target proteins. LRR repeat units follow at residues 57–77 (NSDE…NLPA), 78–99 (QITL…PVTL), 100–117 (KKLY…VLPP), 118–139 (ALES…PDSL), 140–157 (LTMN…SLPQ), 158–179 (ALKN…SEGN), 182–203 (VVRE…ILNL), and 205–228 (NECS…QRLT). Residues 243 to 250 (SDGQQNTL) form a linker region. The tract at residues 251 to 545 (HRPLADAVTA…PENGSQLHHS (295 aa)) is E3 ubiquitin-protein ligase catalytic domain. In terms of domain architecture, NEL spans 253–545 (PLADAVTAWF…PENGSQLHHS (293 aa)). C337 (glycyl thioester intermediate) is an active-site residue.

The protein belongs to the LRR-containing bacterial E3 ligase family. Also interacts with human and mouse U2AF1 (U2AF35). Post-translationally, autoubiquitinated (in vitro). Ubiquitinated in the presence of host E1 ubiquitin-activating enzyme, E2 ubiquitin-conjugating enzyme and ubiquitin.

Its subcellular location is the secreted. It is found in the host cytoplasm. The protein localises to the host nucleus. The catalysed reaction is S-ubiquitinyl-[E2 ubiquitin-conjugating enzyme]-L-cysteine + [acceptor protein]-L-lysine = [E2 ubiquitin-conjugating enzyme]-L-cysteine + N(6)-ubiquitinyl-[acceptor protein]-L-lysine.. The protein operates within protein modification; protein ubiquitination. Exists in an autoinhibited state in the absence of substrate protein, due to interactions of the leucine-rich repeats with NEL domain. Is activated upon binding to a substrate protein. Functionally, effector E3 ubiquitin ligase that interferes with host's ubiquitination pathway and modulates the acute inflammatory responses, thus facilitating bacterial colonization within the host cell. Interacts with IKBKG (NEMO) and TNIP1 (ABIN-1), a ubiquitin-binding adapter protein, which results in TNIP1-dependent 'Lys-27'-linked polyubiquitination of IKBKG. Consequently, polyubiquitinated IKBKG undergoes proteasome-dependent degradation, which perturbs NF-kappa-B activation during bacterial infection. Mediates polyubiquitination of host U2AF1, leading to its proteasomal degradation. Catalyzes 'Lys-48'-linked polyubiquitination and subsequent degradation of a subset of host guanylate-binding proteins (GBP1, GBP2, GBP4 and GBP6), thereby suppressing host cell defense. In contrast, host GBP3 and GBP7 are not ubiquitinated by IpaH9.8. Uses UBE2D2 (UBCH5B) as an E2 ubiquitin-conjugating enzyme. This Shigella flexneri protein is E3 ubiquitin-protein ligase ipaH9.8.